The sequence spans 344 residues: Anthranilate phosphoribosyltransferase (344 aa).

5-phospho-alpha-D-ribose 1-diphosphate is bound by residues glycine 85, 88–89 (GD), threonine 93, 95–98 (NIST), 113–121 (KHGGRSVSS), and serine 125. Residue glycine 85 participates in anthranilate binding. Serine 97 contributes to the Mg(2+) binding site. Arginine 171 provides a ligand contact to anthranilate. Positions 230 and 231 each coordinate Mg(2+).

The protein belongs to the anthranilate phosphoribosyltransferase family. As to quaternary structure, homodimer. It depends on Mg(2+) as a cofactor.

The enzyme catalyses N-(5-phospho-beta-D-ribosyl)anthranilate + diphosphate = 5-phospho-alpha-D-ribose 1-diphosphate + anthranilate. It functions in the pathway amino-acid biosynthesis; L-tryptophan biosynthesis; L-tryptophan from chorismate: step 2/5. Functionally, catalyzes the transfer of the phosphoribosyl group of 5-phosphorylribose-1-pyrophosphate (PRPP) to anthranilate to yield N-(5'-phosphoribosyl)-anthranilate (PRA). This chain is Anthranilate phosphoribosyltransferase, found in Acidovorax ebreus (strain TPSY) (Diaphorobacter sp. (strain TPSY)).